We begin with the raw amino-acid sequence, 203 residues long: Outer-membrane lipoprotein LolB (203 aa).

The signal sequence occupies residues methionine 1–glycine 18. Cysteine 19 carries N-palmitoyl cysteine lipidation. A lipid anchor (S-diacylglycerol cysteine) is attached at cysteine 19.

It belongs to the LolB family. As to quaternary structure, monomer.

The protein localises to the cell outer membrane. In terms of biological role, plays a critical role in the incorporation of lipoproteins in the outer membrane after they are released by the LolA protein. The chain is Outer-membrane lipoprotein LolB from Vibrio parahaemolyticus serotype O3:K6 (strain RIMD 2210633).